The following is a 561-amino-acid chain: Dihydroxy-acid dehydratase (561 aa).

C50 contacts [2Fe-2S] cluster. Residue D82 coordinates Mg(2+). Position 123 (C123) interacts with [2Fe-2S] cluster. Mg(2+) is bound by residues D124 and K125. K125 bears the N6-carboxylysine mark. C195 is a [2Fe-2S] cluster binding site. Mg(2+) is bound at residue E447. Catalysis depends on S473, which acts as the Proton acceptor.

Belongs to the IlvD/Edd family. In terms of assembly, homodimer. It depends on [2Fe-2S] cluster as a cofactor. Mg(2+) is required as a cofactor.

It carries out the reaction (2R)-2,3-dihydroxy-3-methylbutanoate = 3-methyl-2-oxobutanoate + H2O. The enzyme catalyses (2R,3R)-2,3-dihydroxy-3-methylpentanoate = (S)-3-methyl-2-oxopentanoate + H2O. The protein operates within amino-acid biosynthesis; L-isoleucine biosynthesis; L-isoleucine from 2-oxobutanoate: step 3/4. It functions in the pathway amino-acid biosynthesis; L-valine biosynthesis; L-valine from pyruvate: step 3/4. In terms of biological role, functions in the biosynthesis of branched-chain amino acids. Catalyzes the dehydration of (2R,3R)-2,3-dihydroxy-3-methylpentanoate (2,3-dihydroxy-3-methylvalerate) into 2-oxo-3-methylpentanoate (2-oxo-3-methylvalerate) and of (2R)-2,3-dihydroxy-3-methylbutanoate (2,3-dihydroxyisovalerate) into 2-oxo-3-methylbutanoate (2-oxoisovalerate), the penultimate precursor to L-isoleucine and L-valine, respectively. This is Dihydroxy-acid dehydratase from Acaryochloris marina (strain MBIC 11017).